The sequence spans 334 residues: Probable type II restriction enzyme HindVP (334 aa).

The catalysed reaction is Endonucleolytic cleavage of DNA to give specific double-stranded fragments with terminal 5'-phosphates.. A P subtype restriction enzyme that recognizes the double-stranded sequence 5'-GRCGYC-3'; the cleavage site is unknown. The chain is Probable type II restriction enzyme HindVP (hindVRP) from Haemophilus influenzae (strain ATCC 51907 / DSM 11121 / KW20 / Rd).